Consider the following 231-residue polypeptide: MTDRKEHKMKPGRRPTEGMTPSQERIMQVIRNAIDRDGLPPTVKEIAEALGMKTPSAHEQVQKLVKKGFIRRTPRKARSIEIVEQSPEEEPVEKKPDVARLVPVPIIGEVAAGIPILAVENHIGELLMDSRTARGPCFALKVKGDSMIDAEIFEGDYVVVRHQALAENGDIVVAILDGEATVKRLYISEETIELRPENRSYQPIVVPPGGDIRILGKVLAVRGHGAANNNE.

A disordered region spans residues 1-24 (MTDRKEHKMKPGRRPTEGMTPSQE). A DNA-binding region (H-T-H motif) is located at residues 43–62 (VKEIAEALGMKTPSAHEQVQ). Catalysis depends on for autocatalytic cleavage activity residues Ser-146 and Lys-183.

It belongs to the peptidase S24 family. In terms of assembly, homodimer.

It carries out the reaction Hydrolysis of Ala-|-Gly bond in repressor LexA.. Its function is as follows. Represses a number of genes involved in the response to DNA damage (SOS response), including recA and lexA. In the presence of single-stranded DNA, RecA interacts with LexA causing an autocatalytic cleavage which disrupts the DNA-binding part of LexA, leading to derepression of the SOS regulon and eventually DNA repair. This Magnetococcus marinus (strain ATCC BAA-1437 / JCM 17883 / MC-1) protein is LexA repressor.